Consider the following 609-residue polypeptide: Kelch domain-containing protein 10 homolog (609 aa).

The segment at 103–146 (ASDLDEEEEEEDDDVDVDVDYGDTDSESEFEEMYSDEWTSSSDE) is disordered. Residues 104 to 137 (SDLDEEEEEEDDDVDVDVDYGDTDSESEFEEMYS) are compositionally biased toward acidic residues. 6 Kelch repeats span residues 214 to 277 (HLYS…IHNN), 279 to 334 (LISH…IHKH), 335 to 381 (FLYT…RYRH), 389 to 437 (HIFV…GNRG), 458 to 508 (EAFI…HSDN), and 510 to 554 (CMYV…YNDN). Residues 576–609 (LPPQRRRRLDTSQPDPSMLISLYSNPKRARSSTQ) form a disordered region.

Interacts with Elongin-C; may be the substrate recognition component of an E3 ubiquitin ligase complex.

Functionally, activates the Pk92B/DASK1-MAPK signaling cascade. In Drosophila melanogaster (Fruit fly), this protein is Kelch domain-containing protein 10 homolog (slim).